Consider the following 655-residue polypeptide: p-hydroxybenzoic acid efflux pump subunit AaeB (655 aa).

The next 10 membrane-spanning stretches (helical) occupy residues 13-33 (FAVK…HFQL), 38-58 (WAVL…GGEP), 69-89 (LRII…IAMI), 93-113 (LLMI…SSLV), 121-141 (WGLA…EPLL), 152-172 (EIVI…PRSI), 370-390 (LFWL…IAVV), 407-427 (FIYG…VIIP), 431-451 (QSML…GIEV), and 482-502 (FLDS…VILL).

This sequence belongs to the aromatic acid exporter ArAE (TC 2.A.85) family.

It localises to the cell inner membrane. In terms of biological role, forms an efflux pump with AaeA. Could function as a metabolic relief valve, allowing to eliminate certain compounds when they accumulate to high levels in the cell. This is p-hydroxybenzoic acid efflux pump subunit AaeB from Shigella dysenteriae serotype 1 (strain Sd197).